The following is a 574-amino-acid chain: Isocitrate dehydrogenase kinase/phosphatase (574 aa).

ATP contacts are provided by residues 315–321 (APGIRGM) and Lys336. Asp371 is a catalytic residue.

It belongs to the AceK family.

Its subcellular location is the cytoplasm. The catalysed reaction is L-seryl-[isocitrate dehydrogenase] + ATP = O-phospho-L-seryl-[isocitrate dehydrogenase] + ADP + H(+). Bifunctional enzyme which can phosphorylate or dephosphorylate isocitrate dehydrogenase (IDH) on a specific serine residue. This is a regulatory mechanism which enables bacteria to bypass the Krebs cycle via the glyoxylate shunt in response to the source of carbon. When bacteria are grown on glucose, IDH is fully active and unphosphorylated, but when grown on acetate or ethanol, the activity of IDH declines drastically concomitant with its phosphorylation. The sequence is that of Isocitrate dehydrogenase kinase/phosphatase from Escherichia coli O127:H6 (strain E2348/69 / EPEC).